We begin with the raw amino-acid sequence, 340 residues long: SH2 domain-containing adapter protein D (340 aa).

3 disordered regions span residues 1–77 (MAKW…PKHR), 94–186 (GGPG…QPWE), and 198–230 (VQFD…ERVD). Over residues 98 to 108 (EELEADTEYLD) the composition is skewed to acidic residues. The span at 171-186 (PQEDERPADEYDQPWE) shows a compositional bias: basic and acidic residues. The SH2 domain maps to 240–335 (WFHGPLNRAD…AEHLALLYPV (96 aa)).

Post-translationally, tyrosine phosphorylated by ABL.

May function as an adapter protein. This Homo sapiens (Human) protein is SH2 domain-containing adapter protein D (SHD).